A 249-amino-acid polypeptide reads, in one-letter code: Triosephosphate isomerase (249 aa).

Positions 12 and 14 each coordinate substrate. N6-acetyllysine is present on lysine 14. Serine 21 bears the Phosphoserine mark. Tyrosine 68 is subject to 3'-nitrotyrosine. Position 80 is a phosphoserine (serine 80). The active-site Electrophile is histidine 96. Residue serine 106 is modified to Phosphoserine. A Glycyl lysine isopeptide (Lys-Gly) (interchain with G-Cter in SUMO1) cross-link involves residue lysine 142. At lysine 149 the chain carries N6-succinyllysine. Residue lysine 156 is modified to N6-acetyllysine; alternate. Lysine 156 carries the post-translational modification N6-succinyllysine; alternate. A Phosphoserine modification is found at serine 159. Catalysis depends on glutamate 166, which acts as the Proton acceptor. Phosphothreonine is present on threonine 173. The residue at position 194 (lysine 194) is an N6-acetyllysine; alternate. Lysine 194 is subject to N6-succinyllysine; alternate. Residue lysine 194 is modified to N6-methyllysine; alternate. Phosphoserine is present on serine 198. Tyrosine 209 bears the 3'-nitrotyrosine mark. Serine 212 is subject to Phosphoserine. Position 214 is a phosphothreonine (threonine 214). Serine 223 is modified (phosphoserine). At lysine 238 the chain carries N6-acetyllysine.

The protein belongs to the triosephosphate isomerase family. Homodimer.

Its subcellular location is the cytoplasm. The enzyme catalyses D-glyceraldehyde 3-phosphate = dihydroxyacetone phosphate. It catalyses the reaction dihydroxyacetone phosphate = methylglyoxal + phosphate. The protein operates within carbohydrate degradation; glycolysis; D-glyceraldehyde 3-phosphate from glycerone phosphate: step 1/1. It functions in the pathway carbohydrate biosynthesis; gluconeogenesis. Triosephosphate isomerase is an extremely efficient metabolic enzyme that catalyzes the interconversion between dihydroxyacetone phosphate (DHAP) and D-glyceraldehyde-3-phosphate (G3P) in glycolysis and gluconeogenesis. In terms of biological role, it is also responsible for the non-negligible production of methylglyoxal a reactive cytotoxic side-product that modifies and can alter proteins, DNA and lipids. The chain is Triosephosphate isomerase (TPI1) from Homo sapiens (Human).